The sequence spans 347 residues: Dual-specificity RNA methyltransferase RlmN (347 aa).

The active-site Proton acceptor is the Glu93. One can recognise a Radical SAM core domain in the interval 99-327 (DEGRNTLCIS…VITRDSRGSD (229 aa)). An intrachain disulfide couples Cys106 to Cys332. Cys113, Cys117, and Cys120 together coordinate [4Fe-4S] cluster. S-adenosyl-L-methionine contacts are provided by residues 158–159 (GE), Ser190, 213–215 (SLN), and Asn289. The active-site S-methylcysteine intermediate is the Cys332.

It belongs to the radical SAM superfamily. RlmN family. It depends on [4Fe-4S] cluster as a cofactor.

Its subcellular location is the cytoplasm. It carries out the reaction adenosine(2503) in 23S rRNA + 2 reduced [2Fe-2S]-[ferredoxin] + 2 S-adenosyl-L-methionine = 2-methyladenosine(2503) in 23S rRNA + 5'-deoxyadenosine + L-methionine + 2 oxidized [2Fe-2S]-[ferredoxin] + S-adenosyl-L-homocysteine. It catalyses the reaction adenosine(37) in tRNA + 2 reduced [2Fe-2S]-[ferredoxin] + 2 S-adenosyl-L-methionine = 2-methyladenosine(37) in tRNA + 5'-deoxyadenosine + L-methionine + 2 oxidized [2Fe-2S]-[ferredoxin] + S-adenosyl-L-homocysteine. Functionally, specifically methylates position 2 of adenine 2503 in 23S rRNA and position 2 of adenine 37 in tRNAs. m2A2503 modification seems to play a crucial role in the proofreading step occurring at the peptidyl transferase center and thus would serve to optimize ribosomal fidelity. The polypeptide is Dual-specificity RNA methyltransferase RlmN (Pelobacter propionicus (strain DSM 2379 / NBRC 103807 / OttBd1)).